The sequence spans 272 residues: EID1-like F-box protein 3 (272 aa).

One can recognise an F-box domain in the interval 29 to 81 (SGKSGIENERVLVLVFESISWDIHTLCTIASLSRRFCAIARRILWRRLCVNRA).

The chain is EID1-like F-box protein 3 (EDL3) from Arabidopsis thaliana (Mouse-ear cress).